The chain runs to 130 residues: Cytochrome c-type biogenesis protein CcmE (130 aa).

Topologically, residues 1-7 (MKKKHKR) are cytoplasmic. The chain crosses the membrane as a helical; Signal-anchor for type II membrane protein span at residues 8–28 (LLITSGIFCFLSCAVFFILTT). The Extracellular segment spans residues 29-130 (LKENISFFYT…DENYKPKVLK (102 aa)). The heme site is built by His-120 and Tyr-124.

The protein belongs to the CcmE/CycJ family.

Its subcellular location is the cell membrane. Functionally, heme chaperone required for the biogenesis of c-type cytochromes. Transiently binds heme delivered by CcmC and transfers the heme to apo-cytochromes in a process facilitated by CcmF and CcmH. This Wolbachia pipientis subsp. Culex pipiens (strain wPip) protein is Cytochrome c-type biogenesis protein CcmE.